A 249-amino-acid chain; its full sequence is Adenylate kinase (249 aa).

Position 43 to 48 (43 to 48) interacts with ATP; sequence GAGKGT. The tract at residues 63-92 is NMP; that stretch reads ATGDMLRAQVAAKSALGVEAKKIMDQGGLV. AMP is bound by residues T64, R69, 90–92, 119–122, and Q126; these read GLV and GFPR. An LID region spans residues 160–197; it reads GRLVHPASGRSYHKLFNPPKKDMIDDVSGDALVQRSDD. ATP contacts are provided by residues R161 and 170-171; that span reads SY. AMP is bound by residues R194 and R205. Q233 lines the ATP pocket.

The protein belongs to the adenylate kinase family. AK2 subfamily. In terms of assembly, monomer.

It is found in the cytoplasm. Its subcellular location is the cytosol. The protein resides in the mitochondrion intermembrane space. It carries out the reaction AMP + ATP = 2 ADP. Its function is as follows. Catalyzes the reversible transfer of the terminal phosphate group between ATP and AMP. Plays an important role in cellular energy homeostasis and in adenine nucleotide metabolism. Adenylate kinase activity is critical for regulation of the phosphate utilization and the AMP de novo biosynthesis pathways. The chain is Adenylate kinase from Debaryomyces hansenii (strain ATCC 36239 / CBS 767 / BCRC 21394 / JCM 1990 / NBRC 0083 / IGC 2968) (Yeast).